A 319-amino-acid chain; its full sequence is NADH-cytochrome b5 reductase 2 (319 aa).

A helical transmembrane segment spans residues 30 to 46 (LAPVYLTVGLAGLGVGL). One can recognise an FAD-binding FR-type domain in the interval 69–173 (QGWVDLKLSE…KGPLPKYPWE (105 aa)). 176-211 (KHQHICLIAGGTGITPMYQLARHIFKNPEDKTKVTL) contributes to the FAD binding site.

It belongs to the flavoprotein pyridine nucleotide cytochrome reductase family. FAD is required as a cofactor.

The protein resides in the mitochondrion outer membrane. The catalysed reaction is 2 Fe(III)-[cytochrome b5] + NADH = 2 Fe(II)-[cytochrome b5] + NAD(+) + H(+). Its function is as follows. May mediate the reduction of outer membrane cytochrome b5. The polypeptide is NADH-cytochrome b5 reductase 2 (mcr1) (Aspergillus terreus (strain NIH 2624 / FGSC A1156)).